A 349-amino-acid polypeptide reads, in one-letter code: Carbamoyl phosphate synthase small chain (349 aa).

The tract at residues 1–170 is CPSase; it reads MKAKLILENG…KYEISGEGKK (170 aa). Positions 45, 218, and 220 each coordinate L-glutamine. The 180-residue stretch at 170-349 folds into the Glutamine amidotransferase type-1 domain; the sequence is KVAIIDFGIK…IFDEFMKYAL (180 aa). Residue Cys-245 is the Nucleophile of the active site. L-glutamine-binding residues include Leu-246, Gln-249, Asn-287, Gly-289, and Tyr-290. Catalysis depends on residues His-327 and Glu-329.

Belongs to the CarA family. As to quaternary structure, composed of two chains; the small (or glutamine) chain promotes the hydrolysis of glutamine to ammonia, which is used by the large (or ammonia) chain to synthesize carbamoyl phosphate. Tetramer of heterodimers (alpha,beta)4.

It catalyses the reaction hydrogencarbonate + L-glutamine + 2 ATP + H2O = carbamoyl phosphate + L-glutamate + 2 ADP + phosphate + 2 H(+). The enzyme catalyses L-glutamine + H2O = L-glutamate + NH4(+). It functions in the pathway amino-acid biosynthesis; L-arginine biosynthesis; carbamoyl phosphate from bicarbonate: step 1/1. The protein operates within pyrimidine metabolism; UMP biosynthesis via de novo pathway; (S)-dihydroorotate from bicarbonate: step 1/3. In terms of biological role, small subunit of the glutamine-dependent carbamoyl phosphate synthetase (CPSase). CPSase catalyzes the formation of carbamoyl phosphate from the ammonia moiety of glutamine, carbonate, and phosphate donated by ATP, constituting the first step of 2 biosynthetic pathways, one leading to arginine and/or urea and the other to pyrimidine nucleotides. The small subunit (glutamine amidotransferase) binds and cleaves glutamine to supply the large subunit with the substrate ammonia. The protein is Carbamoyl phosphate synthase small chain of Clostridium perfringens (strain 13 / Type A).